Here is a 289-residue protein sequence, read N- to C-terminus: Protease HtpX homolog (289 aa).

A run of 2 helical transmembrane segments spans residues 11-31 (AALFGVLWAVLLGLGAIIAAG) and 34-54 (STTPIWIMALIGVATTAYGYW). Position 138 (histidine 138) interacts with Zn(2+). Glutamate 139 is an active-site residue. Histidine 142 is a binding site for Zn(2+). 2 helical membrane-spanning segments follow: residues 152–172 (SVVAAVAGVITSVGQMLLIFG) and 182–202 (LATIAMALLAPFAASLIQMAI). Glutamate 207 is a Zn(2+) binding site.

This sequence belongs to the peptidase M48B family. Zn(2+) is required as a cofactor.

Its subcellular location is the cell membrane. The chain is Protease HtpX homolog from Paenarthrobacter aurescens (strain TC1).